The sequence spans 409 residues: LysM domain-containing GPI-anchored protein LYP6 (409 aa).

The first 27 residues, 1–27 (MAGWPAAEAAGALVVAILAAAAGGAAG), serve as a signal peptide directing secretion. Intrachain disulfides connect C34–C100, C40–C166, C98–C164, and C100–C166. The region spanning 110-160 (VRYSARPADTLASVADVVFAGLASADQIRTANGLSAEDPDAPLDAGATLVV) is the LysM 1 domain. A glycan (N-linked (GlcNAc...) asparagine) is linked at N168. Residues 179 to 222 (LSYVVRVGDTVQSIAATHATTVTDISNVNAMGSPIVAPGDILAI) form the LysM 2 domain. 2 cysteine pairs are disulfide-bonded: C227–C259 and C254–C282. N244 carries an N-linked (GlcNAc...) asparagine glycan. N291, N302, and N313 each carry an N-linked (GlcNAc...) asparagine glycan. A disordered region spans residues 353–387 (SPAPGAGEAGGDIPGFPGSSNVSPANGPSGSVSQA). Polar residues predominate over residues 370–387 (GSSNVSPANGPSGSVSQA). A387 carries GPI-anchor amidated alanine lipidation. A propeptide spans 388–409 (ASVNRPHQIVALILSVALYFQM) (removed in mature form).

Interacts with LYP4. Interacts with CERK1. Interacts with CEBIP. In terms of tissue distribution, expressed in roots and leaves.

It is found in the cell membrane. Functionally, functions in innate immunity. Functions as a pattern recognition receptor (PRR), sensing bacterial peptidoglycan (PGN) and fungal chitin at the cell surface. Involved in resistance against the bacterial pathogen Xanthomonas oryzae pv. oryzae (Xoo) and the fungal pathogen Magnaporthe oryzae. Binds PGN and fungal chitin in vitro. Involved in microbe-associated molecular patterns (MAMPs) perception and participates in the activation of defense genes against the bacterial pathogen Xanthomonas oryzae pv. oryzicola (Xoc) or the fungal pathogen Magnaporthe oryzae. This chain is LysM domain-containing GPI-anchored protein LYP6, found in Oryza sativa subsp. japonica (Rice).